The following is a 187-amino-acid chain: V-type ATP synthase subunit E (187 aa).

It belongs to the V-ATPase E subunit family.

Produces ATP from ADP in the presence of a proton gradient across the membrane. The chain is V-type ATP synthase subunit E from Clostridioides difficile (strain 630) (Peptoclostridium difficile).